The chain runs to 291 residues: Lipoyl synthase (291 aa).

[4Fe-4S] cluster is bound by residues C36, C41, C47, C62, C66, C69, and S275. In terms of domain architecture, Radical SAM core spans 48 to 264 (FSKKTATFLI…KEFAISIGFK (217 aa)).

It belongs to the radical SAM superfamily. Lipoyl synthase family. It depends on [4Fe-4S] cluster as a cofactor.

The protein resides in the cytoplasm. It carries out the reaction [[Fe-S] cluster scaffold protein carrying a second [4Fe-4S](2+) cluster] + N(6)-octanoyl-L-lysyl-[protein] + 2 oxidized [2Fe-2S]-[ferredoxin] + 2 S-adenosyl-L-methionine + 4 H(+) = [[Fe-S] cluster scaffold protein] + N(6)-[(R)-dihydrolipoyl]-L-lysyl-[protein] + 4 Fe(3+) + 2 hydrogen sulfide + 2 5'-deoxyadenosine + 2 L-methionine + 2 reduced [2Fe-2S]-[ferredoxin]. Its pathway is protein modification; protein lipoylation via endogenous pathway; protein N(6)-(lipoyl)lysine from octanoyl-[acyl-carrier-protein]: step 2/2. Functionally, catalyzes the radical-mediated insertion of two sulfur atoms into the C-6 and C-8 positions of the octanoyl moiety bound to the lipoyl domains of lipoate-dependent enzymes, thereby converting the octanoylated domains into lipoylated derivatives. The chain is Lipoyl synthase from Caldicellulosiruptor bescii (strain ATCC BAA-1888 / DSM 6725 / KCTC 15123 / Z-1320) (Anaerocellum thermophilum).